The primary structure comprises 322 residues: Transcription initiation factor IIB (322 aa).

2 consecutive repeat copies span residues S125 to L213 and N224 to Q305.

Belongs to the TFIIB family.

Functionally, stabilizes TBP binding to an archaeal box-A promoter. Also responsible for recruiting RNA polymerase II to the pre-initiation complex (DNA-TBP-TFIIB). The chain is Transcription initiation factor IIB from Aeropyrum pernix (strain ATCC 700893 / DSM 11879 / JCM 9820 / NBRC 100138 / K1).